The primary structure comprises 217 residues: Urease accessory protein UreE (217 aa).

A disordered region spans residues 148 to 217 (AYGEAAAHGH…DHDHGSGHHH (70 aa)). Residues 160–171 (AGHDHAHDHDHG) show a composition bias toward basic and acidic residues. The span at 193–202 (AAAPAPHVHG) shows a compositional bias: low complexity. Over residues 206–217 (GHDHDHGSGHHH) the composition is skewed to basic and acidic residues.

It belongs to the UreE family.

The protein localises to the cytoplasm. In terms of biological role, involved in urease metallocenter assembly. Binds nickel. Probably functions as a nickel donor during metallocenter assembly. In Methylibium petroleiphilum (strain ATCC BAA-1232 / LMG 22953 / PM1), this protein is Urease accessory protein UreE.